A 213-amino-acid polypeptide reads, in one-letter code: MSRVLVIESSARQRGSVSRLLTAEFISHWKIAHPADRFQVRDLAREPLPHLDELLLGAWTTPCDGHSAAERRALERSNRLTEELRMADVLVLAAPMYNFAIPSSLKSWFDHVLRAGLTFRYAEQGPEGLLQGKRAFVLTARGGIYAGGGLDHQEPYLRQVLGFVGIHDVTFIHAEGMNMGPEFREKGLARARERMRQALETDTSLCVPLPTLR.

Residues Ser10, 16 to 18, and 96 to 99 each bind FMN; these read SVS and MYNF.

The protein belongs to the azoreductase type 1 family. Homodimer. FMN serves as cofactor.

It carries out the reaction 2 a quinone + NADH + H(+) = 2 a 1,4-benzosemiquinone + NAD(+). It catalyses the reaction N,N-dimethyl-1,4-phenylenediamine + anthranilate + 2 NAD(+) = 2-(4-dimethylaminophenyl)diazenylbenzoate + 2 NADH + 2 H(+). Its function is as follows. Quinone reductase that provides resistance to thiol-specific stress caused by electrophilic quinones. Shows a preference for naphthoquinones such as plumbagin. In terms of biological role, also exhibits azoreductase activity. Catalyzes the reductive cleavage of the azo bond in aromatic azo compounds to the corresponding amines. Preferred substrates are methyl red, amaranth and p-aminoazobenzene sulfonamide (PAABSA). This chain is FMN-dependent NADH:quinone oxidoreductase 3, found in Pseudomonas aeruginosa (strain ATCC 15692 / DSM 22644 / CIP 104116 / JCM 14847 / LMG 12228 / 1C / PRS 101 / PAO1).